The sequence spans 468 residues: Heparan-sulfate 6-O-sulfotransferase 2 (468 aa).

Over M1 to R9 the chain is Cytoplasmic. The helical; Signal-anchor for type II membrane protein transmembrane segment at L10–S30 threads the bilayer. The Lumenal portion of the chain corresponds to T31–R468. N-linked (GlcNAc...) asparagine glycosylation is present at N79. H103–T111 serves as a coordination point for 3'-phosphoadenylyl sulfate. Residues K133–K134, R150, W155, and H160 each bind substrate. Residue H160 is the Proton acceptor of the active site. 2 residues coordinate 3'-phosphoadenylyl sulfate: R197 and S205. H209 and W216 together coordinate substrate. A glycan (N-linked (GlcNAc...) asparagine) is linked at N276. T329–L331 is a binding site for 3'-phosphoadenylyl sulfate. A glycan (N-linked (GlcNAc...) asparagine) is linked at N332. R335–A336 provides a ligand contact to 3'-phosphoadenylyl sulfate. The interval F409 to N447 is disordered. Positions A425 to E437 are enriched in basic and acidic residues. The span at S438 to N447 shows a compositional bias: acidic residues.

This sequence belongs to the sulfotransferase 6 family. Expressed ubiquitously during gastrulation. During early somitogenesis, strong expression in head and presumptive brain. During mid-somitogenesis, strong expression in eye, hindbrain and somitic boundaries and weak expression in tail bud. During late somitogenesis, strong expression in eye, hindbrain, branchial arch primordia, spinal cord and ventral medial somites. At 24 hours post-fertilization (hpf), strong expression throughout the head, with expression receeding from the trunk spinal cord, ventral medial somites and somitic boundaries; expressed in cells surrounding vascular structures of the dorsal aorta and caudal vein in the tail. At 36 hpf, expressed in lens, optic stalk, hindbrain and pectoral fin. At 48 hpf, expressed in eye, brain, otic vesicle and branchial arches.

It localises to the membrane. It catalyses the reaction alpha-D-glucosaminyl-[heparan sulfate](n) + 3'-phosphoadenylyl sulfate = 6-sulfo-alpha-D-glucosaminyl-[heparan sulfate](n) + adenosine 3',5'-bisphosphate + H(+). Functionally, 6-O-sulfation enzyme which catalyzes the transfer of sulfate from 3'-phosphoadenosine 5'-phosphosulfate (PAPS) to position 6 of the N-sulfoglucosamine residue (GlcNS) of heparan sulfate. Required for muscle development and angiogenesis. This is Heparan-sulfate 6-O-sulfotransferase 2 (hs6st2) from Danio rerio (Zebrafish).